A 393-amino-acid chain; its full sequence is Phosphoglycerate kinase (393 aa).

Residues 21 to 23 (DFN), Arg37, 60 to 63 (HLGR), Arg119, and Arg152 each bind substrate. ATP is bound by residues Lys202, Gly291, Glu322, and 348 to 351 (GGDT).

This sequence belongs to the phosphoglycerate kinase family. In terms of assembly, monomer.

Its subcellular location is the cytoplasm. It carries out the reaction (2R)-3-phosphoglycerate + ATP = (2R)-3-phospho-glyceroyl phosphate + ADP. Its pathway is carbohydrate degradation; glycolysis; pyruvate from D-glyceraldehyde 3-phosphate: step 2/5. This Coprothermobacter proteolyticus (strain ATCC 35245 / DSM 5265 / OCM 4 / BT) protein is Phosphoglycerate kinase.